The primary structure comprises 312 residues: Probable carboxylesterase 7 (312 aa).

Residue Met-1 is modified to N-acetylmethionine. The Involved in the stabilization of the negatively charged intermediate by the formation of the oxyanion hole motif lies at 75–77 (HGG). Residues Ser-159, Asp-255, and His-287 contribute to the active site.

Belongs to the 'GDXG' lipolytic enzyme family. In terms of tissue distribution, expressed in leaves, stems, flowers and siliques.

The enzyme catalyses a carboxylic ester + H2O = an alcohol + a carboxylate + H(+). In terms of biological role, carboxylesterase acting on esters with varying acyl chain length. The polypeptide is Probable carboxylesterase 7 (CXE7) (Arabidopsis thaliana (Mouse-ear cress)).